The primary structure comprises 616 residues: Tumor necrosis factor receptor superfamily member 11A (616 aa).

The signal sequence occupies residues 1–29 (MAPRARRRRPLFALLLLCALLARLQVALQ). The Extracellular portion of the chain corresponds to 30–212 (IAPPCTSEKH…PPNEPHVYLP (183 aa)). Cystine bridges form between Cys34–Cys46, Cys47–Cys60, Cys50–Cys68, Cys71–Cys86, Cys92–Cys112, Cys114–Cys127, Cys124–Cys126, Cys133–Cys151, and Cys154–Cys169. TNFR-Cys repeat units follow at residues 34 to 68 (CTSE…DSVC), 71 to 112 (CGPD…PRRC), 114 to 151 (CTAG…DTVC), and 154 to 194 (CLAG…DAVC). Asn105 is a glycosylation site (N-linked (GlcNAc...) asparagine). 3 residues coordinate Na(+): Cys133, Ala134, and Ser160. N-linked (GlcNAc...) asparagine glycosylation is present at Asn174. A disulfide bridge links Cys175 with Cys194. A helical transmembrane segment spans residues 213–233 (GLIILLLFASVALVAAIIFGV). Residues 234–616 (CYRKKGKALT…PVQEQGGAKA (383 aa)) lie on the Cytoplasmic side of the membrane. The disordered stretch occupies residues 468–536 (PLPQCAYGMG…GNSNSTFISS (69 aa)). Residues 483–493 (EASRTEARDQP) are compositionally biased toward basic and acidic residues. Over residues 499–508 (GRLPSSARAG) the composition is skewed to low complexity. Polar residues predominate over residues 524-536 (NVTGNSNSTFISS). The interval 544-549 (GDIIVV) is required for interaction with EEIG1 and osteoclast differentiation. Residues 556–616 (QEGAAAAAEP…PVQEQGGAKA (61 aa)) form a disordered region. Basic and acidic residues predominate over residues 570–580 (VQEETLARRDS). A Phosphoserine modification is found at Ser580.

In terms of assembly, binds to the clefts between the subunits of the TNFSF11 ligand trimer to form a heterohexamer. Part of a complex composed of EEIG1, TNFRSF11A/RANK, PLCG2, GAB2, TEC and BTK; complex formation increases in the presence of TNFSF11/RANKL. Interacts with TRAF1, TRAF2, TRAF3, TRAF5 and TRAF6. Interacts (via cytoplasmic domain) with GAB2. Interacts (via cytoplasmic domain); with EEIG1 (via N-terminus); when in the presence of TNFSF11/RANKL. Ubiquitous expression with high levels in skeletal muscle, thymus, liver, colon, small intestine and adrenal gland.

It localises to the cell membrane. Its subcellular location is the membrane raft. Functionally, receptor for TNFSF11/RANKL/TRANCE/OPGL; essential for RANKL-mediated osteoclastogenesis. Its interaction with EEIG1 promotes osteoclastogenesis via facilitating the transcription of NFATC1 and activation of PLCG2. Involved in the regulation of interactions between T-cells and dendritic cells. This is Tumor necrosis factor receptor superfamily member 11A (TNFRSF11A) from Homo sapiens (Human).